Reading from the N-terminus, the 245-residue chain is MTLTASSSSRAVTNSPVVVALDYHNRDDALSFVDKIDPRDCRLKVGKEMFTLFGPQFVRELQQRGFDIFLDLKFHDIPNTAAHAVAAAADLGVWMVNVHASGGARMMTAAREALVPFGKDAPLLIAVTVLTSMEASDLVDLGMTLSPADYAERLAALTQKCGLDGVVCSAQEAVRFKQVFGQEFKLVTPGIRPQGSEAGDQRRIMTPEQALSAGVDYMVIGRPVTQSVDPAQTLKAINASLQRSA.

Residues D22, K44, 71–80 (DLKFHDIPNT), T131, R192, Q201, G221, and R222 each bind substrate. Residue K73 is the Proton donor of the active site.

The protein belongs to the OMP decarboxylase family. Type 1 subfamily. As to quaternary structure, homodimer.

It catalyses the reaction orotidine 5'-phosphate + H(+) = UMP + CO2. It participates in pyrimidine metabolism; UMP biosynthesis via de novo pathway; UMP from orotate: step 2/2. Functionally, catalyzes the decarboxylation of orotidine 5'-monophosphate (OMP) to uridine 5'-monophosphate (UMP). This is Orotidine 5'-phosphate decarboxylase from Escherichia coli (strain 55989 / EAEC).